A 203-amino-acid polypeptide reads, in one-letter code: ATP-dependent Clp protease proteolytic subunit 1 (203 aa).

Ser102 serves as the catalytic Nucleophile. His127 is an active-site residue.

The protein belongs to the peptidase S14 family. Fourteen ClpP subunits assemble into 2 heptameric rings which stack back to back to give a disk-like structure with a central cavity, resembling the structure of eukaryotic proteasomes.

The protein localises to the cytoplasm. It carries out the reaction Hydrolysis of proteins to small peptides in the presence of ATP and magnesium. alpha-casein is the usual test substrate. In the absence of ATP, only oligopeptides shorter than five residues are hydrolyzed (such as succinyl-Leu-Tyr-|-NHMec, and Leu-Tyr-Leu-|-Tyr-Trp, in which cleavage of the -Tyr-|-Leu- and -Tyr-|-Trp bonds also occurs).. In terms of biological role, cleaves peptides in various proteins in a process that requires ATP hydrolysis. Has a chymotrypsin-like activity. Plays a major role in the degradation of misfolded proteins. In Rhizobium johnstonii (strain DSM 114642 / LMG 32736 / 3841) (Rhizobium leguminosarum bv. viciae), this protein is ATP-dependent Clp protease proteolytic subunit 1.